Reading from the N-terminus, the 377-residue chain is Succinyl-diaminopimelate desuccinylase (377 aa).

Histidine 66 lines the Zn(2+) pocket. Aspartate 68 is an active-site residue. Aspartate 99 lines the Zn(2+) pocket. Glutamate 133 serves as the catalytic Proton acceptor. The Zn(2+) site is built by glutamate 134, glutamate 163, and histidine 349.

Belongs to the peptidase M20A family. DapE subfamily. As to quaternary structure, homodimer. The cofactor is Zn(2+). It depends on Co(2+) as a cofactor.

The enzyme catalyses N-succinyl-(2S,6S)-2,6-diaminopimelate + H2O = (2S,6S)-2,6-diaminopimelate + succinate. It functions in the pathway amino-acid biosynthesis; L-lysine biosynthesis via DAP pathway; LL-2,6-diaminopimelate from (S)-tetrahydrodipicolinate (succinylase route): step 3/3. Its function is as follows. Catalyzes the hydrolysis of N-succinyl-L,L-diaminopimelic acid (SDAP), forming succinate and LL-2,6-diaminopimelate (DAP), an intermediate involved in the bacterial biosynthesis of lysine and meso-diaminopimelic acid, an essential component of bacterial cell walls. The sequence is that of Succinyl-diaminopimelate desuccinylase from Legionella pneumophila (strain Paris).